We begin with the raw amino-acid sequence, 971 residues long: ATP-dependent helicase NAM7 (971 aa).

The segment at Met1 to Gln22 is disordered. The region spanning Ser54 to Asn208 is the Upf1 CH-rich domain. Residue Ser56 is modified to Phosphoserine. The Zn(2+) site is built by Cys62, Cys65, Cys76, Cys79, Cys84, His94, His98, His104, Cys122, Cys125, Cys148, and Cys152. The tract at residues Cys62–His94 is C3H. The CC/SHH/C stretch occupies residues Cys76–His104. Residues Cys122–Cys152 form a C4 region. Residues Gln413, Gly433–Thr437, Gln601, Tyr638, and Glu769 contribute to the ATP site. A Phosphoserine modification is found at Ser869.

This sequence belongs to the DNA2/NAM7 helicase family.

It localises to the cytoplasm. It carries out the reaction ATP + H2O = ADP + phosphate + H(+). RNA-dependent helicase required for nonsense-mediated decay (NMD) of aberrant mRNAs containing premature stop codons and modulates the expression level of normal mRNAs. Also capable of unwinding double-stranded DNA and translocating on single-stranded DNA. This is ATP-dependent helicase NAM7 (NAM7) from Saccharomyces cerevisiae (strain ATCC 204508 / S288c) (Baker's yeast).